The sequence spans 122 residues: Ig heavy chain V region M511 (122 aa).

An Ig-like domain is found at 1–114 (EVKLVESGGG…SYWYFDVWGA (114 aa)).

This chain is Ig heavy chain V region M511, found in Mus musculus (Mouse).